A 490-amino-acid chain; its full sequence is Betaine aldehyde dehydrogenase (490 aa).

Residue aspartate 93 participates in K(+) binding. 150 to 152 (GAW) lines the NAD(+) pocket. Residue lysine 162 is the Charge relay system of the active site. 176–179 (KPSE) lines the NAD(+) pocket. A K(+)-binding site is contributed by valine 180. 230–233 (GIAS) is an NAD(+) binding site. Leucine 246 provides a ligand contact to K(+). The active-site Proton acceptor is the glutamate 252. 3 residues coordinate NAD(+): glycine 254, cysteine 286, and glutamate 387. Cysteine 286 functions as the Nucleophile in the catalytic mechanism. Cysteine 286 carries the post-translational modification Cysteine sulfenic acid (-SOH). K(+) contacts are provided by lysine 457 and glycine 460. Residue glutamate 464 is the Charge relay system of the active site.

It belongs to the aldehyde dehydrogenase family. Dimer of dimers. K(+) serves as cofactor.

The catalysed reaction is betaine aldehyde + NAD(+) + H2O = glycine betaine + NADH + 2 H(+). It participates in amine and polyamine biosynthesis; betaine biosynthesis via choline pathway; betaine from betaine aldehyde: step 1/1. Its function is as follows. Involved in the biosynthesis of the osmoprotectant glycine betaine. Catalyzes the irreversible oxidation of betaine aldehyde to the corresponding acid. The protein is Betaine aldehyde dehydrogenase of Pectobacterium atrosepticum (strain SCRI 1043 / ATCC BAA-672) (Erwinia carotovora subsp. atroseptica).